The chain runs to 2611 residues: Highly reducing polyketide synthase ATEG_07659 (2611 aa).

In terms of domain architecture, Ketosynthase family 3 (KS3) spans 10-409 (SEPIAIIGLS…GTNSHVIVEG (400 aa)). Catalysis depends on for beta-ketoacyl synthase activity residues Cys-157, His-292, and His-330. The malonyl-CoA:ACP transacylase (MAT) domain stretch occupies residues 537–844 (MVFTGQGAQW…VRFVEAFTDM (308 aa)). Positions 969-1109 (HDLLGVLVPG…GLITVQMAAD (141 aa)) are N-terminal hotdog fold. Residues 969-1292 (HDLLGVLVPG…CQSLGRSAPG (324 aa)) form the PKS/mFAS DH domain. The interval 970 to 1289 (DLLGVLVPGT…GLVCQSLGRS (320 aa)) is dehydratase (DH) domain. His-1001 serves as the catalytic Proton acceptor; for dehydratase activity. The segment at 1128-1292 (GYTRRIDPQD…CQSLGRSAPG (165 aa)) is C-terminal hotdog fold. Asp-1199 acts as the Proton donor; for dehydratase activity in catalysis. Residues 1469–1602 (FGQLKSLLAA…GATLLLMETT (134 aa)) are methyltransferase (CMet) domain. The segment at 1898–2213 (GLLDTLAFGD…TGKHLGKLVL (316 aa)) is enoyl reductase (ER) domain. The interval 2236-2416 (ASYLLVGGVG…AVSLDMGVIK (181 aa)) is ketoreductase (KR) domain. Low complexity predominate over residues 2499–2509 (SRAQAQQAGGD). Residues 2499 to 2520 (SRAQAQQAGGDSDSEPLSAKLR) are disordered. The Carrier domain maps to 2527–2604 (AAARCVGDAI…ALALDVVAKS (78 aa)). Ser-2564 carries the O-(pantetheine 4'-phosphoryl)serine modification.

It participates in secondary metabolite biosynthesis. In terms of biological role, highly reducing polyketide synthase; part of the cluster B that mediates the biosynthesis of azasperpyranones, members of the azaphilone family that exhibit anti-cancer activities. Azasperpyranones are synthesized by 2 clusters, A and B. Cluster A is responsible for the production of the polyhydric phenol moiety while the azaphilonoid scaffold is produced by the cluster B. The non-reducing polyketide synthase ATEG_03629 produces 5-methyl orsellinic acid, which is then reduced to 5-methyl orsellinic aldehyde by the NRPS-like protein ATEG_03630. 5-methyl orsellinic aldehyde is then first hydroxylated by the FAD-dependent monooxygenase ATEG_03635 and subsequently hydroxylated by the cytochrome P450 monooxygenase ATEG_03631 to produce the unstable polyhydric phenol precursor of azasperpyranones. On the other hand, the polyketide synthase ATEG_07659 is responsible for producing the 3,5-dimethyloctadienone moiety from acetyl-CoA, three malonyl-CoA, and two S-adenosyl methionines (SAM). The 3,5-dimethyloctadienone moiety is then loaded onto the SAT domain of ATEG_07661 and extended with four malonyl-CoA and one SAM, which leads to the formation of 2,4-dihydroxy-6-(5,7-dimethyl-2-oxo-trans-3-trans-5-nonadienyl)-3-methylbenzaldehyde (compound 8) after reductive release and aldol condensation. The FAD-dependent monooxygenase ATEG_07662 is the next enzyme in the biosynthesis sequence and hydroxylates the side chain at the benzylic position of compound 8. In Aspergillus nidulans, afoF, the ortholog of the FAD-dependent oxygenase ATEG_07660, is the key enzyme for the biosynthesis of asperfuranone by catalyzing the hydroxylation at C-8 of to prevent the formation of a six-membered ring hemiacetal intermediate and thus facilitating the formation of a five-membered ring to produce asperfuranone. In Aspergillus terreus, ATEG_07660 is probably not functional, which leads to the formation of the six-membered ring hemiacetal intermediate presperpyranone instead of asperfuranone. Finally, ATEG_03636 is involved in the condensation of the polyhydric phenol moiety produced by cluster A and the perasperpyranone precursor produced by cluster B, to yield azasperpyranone A. Further modifications of azasperpyranone A result in the production of derivatives, including azasperpyranone B to F. In Aspergillus terreus (strain NIH 2624 / FGSC A1156), this protein is Highly reducing polyketide synthase ATEG_07659.